The chain runs to 420 residues: Probable glycosyltransferase YdaM (420 aa).

4 consecutive transmembrane segments (helical) span residues 4–24, 299–319, 332–352, and 371–391; these read TLFF…MFLM, IIFD…GVIM, LHLS…FLFM, and FFIV…LVIY.

Belongs to the glycosyltransferase 2 family.

It localises to the cell membrane. This is Probable glycosyltransferase YdaM (ydaM) from Bacillus subtilis (strain 168).